Consider the following 2335-residue polypeptide: Histone-lysine N-methyltransferase ATXR3 (2335 aa).

Disordered stretches follow at residues 30 to 142, 332 to 355, 371 to 556, and 902 to 961; these read NESK…FKDE, STGNRLKRHGAEPDSIERKHSYAD, CSRS…SSSK, and DQVP…KTDT. Composition is skewed to polar residues over residues 31–46 and 53–62; these read ESKTAATTENGHTSIA and QPANKPSASS. A compositionally biased stretch (basic residues) spans 65-84; it reads VKKKRIVKVIRKVVKRRPKQ. The Nuclear localization signal 1 motif lies at 67–74; the sequence is KKRIVKVI. Polar residues predominate over residues 97–112; sequence PPSQVVQLPAESQLQI. 3 stretches are compositionally biased toward basic and acidic residues: residues 340 to 353, 371 to 390, and 430 to 452; these read HGAEPDSIERKHSY, CSRSLHSDHYSQHSAERLYR, and WSPHDRSRYHENRDRSPYARERS. Positions 461–475 are enriched in basic residues; that stretch reads HARKRSPRDRRHHDY. 3 stretches are compositionally biased toward basic and acidic residues: residues 485-498, 507-548, and 910-921; these read SPHDRSRPSDRRDY, QSDR…ESNG, and PRAKVRSKERCP. The Nuclear localization signal 2 motif lies at 527-534; that stretch reads ERRDCQTG. The span at 922–932 shows a compositional bias: low complexity; the sequence is SRPARPSPASS. A compositionally biased stretch (polar residues) spans 941 to 961; the sequence is SHSQSTASTGQDSQGLWKTDT. A Nuclear localization signal 3 motif is present at residues 1382 to 1389; the sequence is ARRSSAIL. The interval 1532-1572 is disordered; it reads NRKSFSSESDTSSELSDNGKSDNYSSASASESESDIRSEGR. The segment covering 1535-1547 has biased composition (low complexity); the sequence is SFSSESDTSSELS. Residues 1765-1904 form the SET domain; that stretch reads KEIESRSDDK…YGEEITFDYN (140 aa). Zn(2+) is bound at residue Cys1868. Tyr1903 is a binding site for S-adenosyl-L-methionine. Residues 1914–1930 enclose the Post-SET domain; the sequence is EASVCLCGSQVCRGSYL. Residues Cys1918, Cys1920, and Cys1925 each coordinate Zn(2+).

It belongs to the class V-like SAM-binding methyltransferase superfamily. Histone-lysine methyltransferase family. TRX/MLL subfamily. Expressed in roots, leaves, stems and inflorescences.

The protein resides in the nucleus. The catalysed reaction is L-lysyl(4)-[histone H3] + 3 S-adenosyl-L-methionine = N(6),N(6),N(6)-trimethyl-L-lysyl(4)-[histone H3] + 3 S-adenosyl-L-homocysteine + 3 H(+). In terms of biological role, histone methyltransferase specifically required for trimethylation of 'Lys-4' of histone H3 (H3K4me3) and is crucial for both sporophyte and gametophyte development. Function as a diurnal 'writer' to counteract the nocturne 'eraser' demethylase activity of JMJ14 thus orchestrating the circadian rhythm of histone modifications (e.g. H3K4me3) and modulating the rhythmic expression of diurnal target genes; this mechanism relies also on the circadian clock oscillators CCA1 and LHY. The polypeptide is Histone-lysine N-methyltransferase ATXR3 (Arabidopsis thaliana (Mouse-ear cress)).